A 239-amino-acid polypeptide reads, in one-letter code: Small ribosomal subunit protein uS5 (239 aa).

A disordered region spans residues 1–62 (MADETEIQAA…DDRRGSEEQG (62 aa)). Residues 9–19 (AAAPAEAAPGA) are compositionally biased toward low complexity. Positions 34–62 (GGNDRGGDRGRGRDGRGRRDDRRGSEEQG) are enriched in basic and acidic residues. The S5 DRBM domain occupies 65–128 (LIEKLVHINR…AAAKKAMVRV (64 aa)).

It belongs to the universal ribosomal protein uS5 family. In terms of assembly, part of the 30S ribosomal subunit. Contacts proteins S4 and S8.

Functionally, with S4 and S12 plays an important role in translational accuracy. Its function is as follows. Located at the back of the 30S subunit body where it stabilizes the conformation of the head with respect to the body. The sequence is that of Small ribosomal subunit protein uS5 from Rhizorhabdus wittichii (strain DSM 6014 / CCUG 31198 / JCM 15750 / NBRC 105917 / EY 4224 / RW1) (Sphingomonas wittichii).